The sequence spans 257 residues: Imidazole glycerol phosphate synthase subunit HisF (257 aa).

Residues D11 and D130 contribute to the active site.

Belongs to the HisA/HisF family. In terms of assembly, heterodimer of HisH and HisF.

It localises to the cytoplasm. It catalyses the reaction 5-[(5-phospho-1-deoxy-D-ribulos-1-ylimino)methylamino]-1-(5-phospho-beta-D-ribosyl)imidazole-4-carboxamide + L-glutamine = D-erythro-1-(imidazol-4-yl)glycerol 3-phosphate + 5-amino-1-(5-phospho-beta-D-ribosyl)imidazole-4-carboxamide + L-glutamate + H(+). It participates in amino-acid biosynthesis; L-histidine biosynthesis; L-histidine from 5-phospho-alpha-D-ribose 1-diphosphate: step 5/9. IGPS catalyzes the conversion of PRFAR and glutamine to IGP, AICAR and glutamate. The HisF subunit catalyzes the cyclization activity that produces IGP and AICAR from PRFAR using the ammonia provided by the HisH subunit. The sequence is that of Imidazole glycerol phosphate synthase subunit HisF from Actinobacillus succinogenes (strain ATCC 55618 / DSM 22257 / CCUG 43843 / 130Z).